Consider the following 187-residue polypeptide: Large ribosomal subunit protein bL21 (187 aa).

A disordered region spans residues 157–187 (KVAKKAVKKTVKKATKTGAKKKAAKKTSKKA).

It belongs to the bacterial ribosomal protein bL21 family. As to quaternary structure, part of the 50S ribosomal subunit. Contacts protein L20.

Functionally, this protein binds to 23S rRNA in the presence of protein L20. The protein is Large ribosomal subunit protein bL21 of Bdellovibrio bacteriovorus (strain ATCC 15356 / DSM 50701 / NCIMB 9529 / HD100).